A 193-amino-acid polypeptide reads, in one-letter code: MTAVCLVRHGETDWNLQQKCQGKTDIPLNATGERQARETGEYVKDFSWDIIVTSPLKRAKRTAEIINEYLHLPIVEMDDFKERDYGDAEGMPLEERTKRYPDNIYPNMETLEELTDRLMGGLAKVNQAYPNKKVLIVAHGAAIHALLTEISGGDPELQSTRLVNACLSNIEFAEEKWRIKDYNINSHLSGFIK.

Substrate is bound at residue Arg-8. His-9 functions as the Tele-phosphohistidine intermediate in the catalytic mechanism. Positions 15, 21, and 58 each coordinate substrate. Glu-82 functions as the Proton donor/acceptor in the catalytic mechanism. His-139 is a substrate binding site.

The protein belongs to the phosphoglycerate mutase family. GpmB subfamily.

In terms of biological role, phosphatase with broad substrate specificity. Does not have phosphoglycerate mutase activity. This is an uncharacterized protein from Bacillus subtilis (strain 168).